The primary structure comprises 2410 residues: Dual specificity protein kinase splA (2410 aa).

Disordered stretches follow at residues asparagine 29–asparagine 48, asparagine 66–threonine 103, asparagine 116–glycine 158, asparagine 187–isoleucine 252, glutamine 508–alanine 647, and serine 659–glycine 820. Low complexity-rich tracts occupy residues asparagine 116–asparagine 128 and asparagine 137–glycine 158. The segment covering glutamine 514–glutamine 525 has biased composition (pro residues). The segment covering leucine 530–serine 544 has biased composition (low complexity). Residues phenylalanine 545–leucine 554 are compositionally biased toward polar residues. Positions serine 560–proline 583 are enriched in low complexity. Residues threonine 584 to threonine 594 are compositionally biased toward pro residues. Composition is skewed to low complexity over residues asparagine 595 to valine 618, valine 627 to proline 639, serine 659 to serine 686, serine 701 to valine 738, isoleucine 746 to serine 759, and asparagine 777 to asparagine 813. B30.2/SPRY domains lie at serine 822 to serine 1004 and aspartate 1020 to lysine 1209. Disordered regions lie at residues proline 1228–tyrosine 1428 and serine 1493–isoleucine 1512. 4 stretches are compositionally biased toward low complexity: residues asparagine 1229–isoleucine 1359, serine 1373–serine 1399, serine 1419–tyrosine 1428, and serine 1493–threonine 1507. The 223-residue stretch at proline 1481–phenylalanine 1703 folds into the B30.2/SPRY 3 domain. The SAM domain occupies tryptophan 1734 to isoleucine 1798. Residues lysine 1862–arginine 2105 are disordered. Residues threonine 1865–arginine 1874 are compositionally biased toward basic and acidic residues. Residues serine 1951 to serine 1967 show a composition bias toward low complexity. The segment covering isoleucine 1989–proline 2002 has biased composition (polar residues). The segment covering serine 2020–asparagine 2070 has biased composition (low complexity). Residues proline 2089–leucine 2102 are compositionally biased toward pro residues. Residues leucine 2115–glutamate 2387 enclose the Protein kinase domain. Residues isoleucine 2121–valine 2129 and lysine 2142 each bind ATP. Aspartate 2243 (proton acceptor) is an active-site residue.

Belongs to the protein kinase superfamily. TKL Tyr protein kinase family. Tyrosine kinase domain is capable of autophosphorylation, in vitro; however it is also autophosphorylated on serine and threonine residues.

The catalysed reaction is L-tyrosyl-[protein] + ATP = O-phospho-L-tyrosyl-[protein] + ADP + H(+). Its function is as follows. Essential for spore differentiation. The polypeptide is Dual specificity protein kinase splA (splA) (Dictyostelium discoideum (Social amoeba)).